A 75-amino-acid polypeptide reads, in one-letter code: Small integral membrane protein 7-A (75 aa).

Positions methionine 1–alanine 17 are cleaved as a signal peptide. Residues valine 18–tyrosine 53 are Extracellular-facing. Residues phenylalanine 54–glycine 74 traverse the membrane as a helical segment. Position 75 (serine 75) is a topological domain, cytoplasmic.

It belongs to the SMIM7 family.

It is found in the membrane. This Xenopus laevis (African clawed frog) protein is Small integral membrane protein 7-A (smim7-a).